A 548-amino-acid chain; its full sequence is CTP synthase (548 aa).

Residues 1–267 (MKTKFIFITG…DQKIAIMLQL (267 aa)) are amidoligase domain. S14 serves as a coordination point for CTP. S14 provides a ligand contact to UTP. ATP is bound by residues 15–20 (SLGKGL) and D72. Mg(2+) is bound by residues D72 and E141. Residues 148-150 (DIE), 188-193 (KTKPTQ), and K224 contribute to the CTP site. UTP contacts are provided by residues 188 to 193 (KTKPTQ) and K224. Positions 292 to 545 (TIGIVGKYVD…IKAAGKQAVK (254 aa)) constitute a Glutamine amidotransferase type-1 domain. Residue G354 coordinates L-glutamine. C381 acts as the Nucleophile; for glutamine hydrolysis in catalysis. L-glutamine is bound by residues 382-385 (LGMQ), E405, and R473. Catalysis depends on residues H518 and E520.

The protein belongs to the CTP synthase family. In terms of assembly, homotetramer.

It catalyses the reaction UTP + L-glutamine + ATP + H2O = CTP + L-glutamate + ADP + phosphate + 2 H(+). The enzyme catalyses L-glutamine + H2O = L-glutamate + NH4(+). It carries out the reaction UTP + NH4(+) + ATP = CTP + ADP + phosphate + 2 H(+). Its pathway is pyrimidine metabolism; CTP biosynthesis via de novo pathway; CTP from UDP: step 2/2. Allosterically activated by GTP, when glutamine is the substrate; GTP has no effect on the reaction when ammonia is the substrate. The allosteric effector GTP functions by stabilizing the protein conformation that binds the tetrahedral intermediate(s) formed during glutamine hydrolysis. Inhibited by the product CTP, via allosteric rather than competitive inhibition. Functionally, catalyzes the ATP-dependent amination of UTP to CTP with either L-glutamine or ammonia as the source of nitrogen. Regulates intracellular CTP levels through interactions with the four ribonucleotide triphosphates. This chain is CTP synthase, found in Oleidesulfovibrio alaskensis (strain ATCC BAA-1058 / DSM 17464 / G20) (Desulfovibrio alaskensis).